The chain runs to 171 residues: Flavodoxin (171 aa).

In terms of domain architecture, Flavodoxin-like spans 4-165; it reads IGIFFGSDTG…RIKQWVKQII (162 aa).

This sequence belongs to the flavodoxin family. It depends on FMN as a cofactor.

Its function is as follows. Low-potential electron donor to a number of redox enzymes. This Buchnera aphidicola subsp. Acyrthosiphon pisum (strain APS) (Acyrthosiphon pisum symbiotic bacterium) protein is Flavodoxin (fldA).